A 347-amino-acid polypeptide reads, in one-letter code: Ion-translocating oxidoreductase complex subunit D (347 aa).

The next 4 membrane-spanning stretches (helical) occupy residues 15-35 (IMFL…YFFG), 36-56 (IGTL…EIII), 84-104 (IPPL…IVVA), and 114-134 (NIFN…PVYM). Threonine 182 bears the FMN phosphoryl threonine mark. The next 5 helical transmembrane spans lie at 217 to 237 (CINI…IICW), 239 to 259 (IPIS…FYSK), 261 to 281 (LFMS…AFFI), 289 to 309 (ACNN…VWII), and 315 to 335 (YPDA…LVDY).

This sequence belongs to the NqrB/RnfD family. As to quaternary structure, the complex is composed of six subunits: RnfA, RnfB, RnfC, RnfD, RnfE and RnfG. Requires FMN as cofactor.

It is found in the cell inner membrane. Part of a membrane-bound complex that couples electron transfer with translocation of ions across the membrane. The polypeptide is Ion-translocating oxidoreductase complex subunit D (Buchnera aphidicola subsp. Acyrthosiphon pisum (strain 5A)).